The chain runs to 812 residues: Xaa-Pro dipeptidyl-peptidase (812 aa).

Active-site charge relay system residues include serine 372, aspartate 492, and histidine 523.

It belongs to the peptidase S15 family. Homodimer.

It is found in the cytoplasm. It catalyses the reaction Hydrolyzes Xaa-Pro-|- bonds to release unblocked, N-terminal dipeptides from substrates including Ala-Pro-|-p-nitroanilide and (sequentially) Tyr-Pro-|-Phe-Pro-|-Gly-Pro-|-Ile.. Functionally, removes N-terminal dipeptides sequentially from polypeptides having unsubstituted N-termini provided that the penultimate residue is proline. This is Xaa-Pro dipeptidyl-peptidase from Pediococcus pentosaceus (strain ATCC 25745 / CCUG 21536 / LMG 10740 / 183-1w).